A 381-amino-acid chain; its full sequence is CCN family member 1 (381 aa).

The N-terminal stretch at Met1–Ser24 is a signal peptide. The IGFBP N-terminal domain occupies Thr25–Gln94. Cystine bridges form between Cys26–Cys50, Cys30–Cys52, Cys32–Cys53, Cys39–Cys56, Cys64–Cys78, and Cys70–Cys91. The VWFC domain maps to Arg98–Asp164. Ser188 bears the Phosphoserine; by FAM20C mark. Residues Lys228–Gly273 enclose the TSP type-1 domain. Residues Ser279 to Gly315 form a heparin-binding region. 5 cysteine pairs are disulfide-bonded: Cys286-Cys323, Cys303-Cys337, Cys314-Cys353, Cys317-Cys355, and Cys322-Cys359. Residues Cys286 to Pro360 form the CTCK domain.

The protein belongs to the CCN family. As to quaternary structure, interaction with integrins is heparin- and cell-type-dependent and promotes cell adhesion. In skin fibroblasts it binds ITGA6/ITGB1, in endothelial cells, binds ITGAV/ITGB3 and in platelets, ITGA2B/ITGB3. Binds, in vitro, ITGAV/ITGB5.

Its subcellular location is the secreted. Promotes cell proliferation, chemotaxis, angiogenesis and cell adhesion. Appears to play a role in wound healing by up-regulating, in skin fibroblasts, the expression of a number of genes involved in angiogenesis, inflammation and matrix remodeling including VEGA-A, VEGA-C, MMP1, MMP3, TIMP1, uPA, PAI-1 and integrins alpha-3 and alpha-5. CCN1-mediated gene regulation is dependent on heparin-binding. Down-regulates the expression of alpha-1 and alpha-2 subunits of collagen type-1. Promotes cell adhesion and adhesive signaling through integrin alpha-6/beta-1, cell migration through integrin alpha-v/beta-5 and cell proliferation through integrin alpha-v/beta-3. This is CCN family member 1 from Homo sapiens (Human).